Here is a 243-residue protein sequence, read N- to C-terminus: Peptidyl-tRNA hydrolase (243 aa).

Y14 contacts tRNA. The active-site Proton acceptor is the H19. 3 residues coordinate tRNA: F64, N66, and N112. Residues 190–205 (KAEEEKPAKEMKDAGK) are compositionally biased toward basic and acidic residues. Positions 190–243 (KAEEEKPAKEMKDAGKKPASQSHIHQARNHNQPKLPATGPMADMLKKMFGKKGD) are disordered. Positions 208–221 (ASQSHIHQARNHNQ) are enriched in polar residues.

Belongs to the PTH family. In terms of assembly, monomer.

Its subcellular location is the cytoplasm. The enzyme catalyses an N-acyl-L-alpha-aminoacyl-tRNA + H2O = an N-acyl-L-amino acid + a tRNA + H(+). Functionally, hydrolyzes ribosome-free peptidyl-tRNAs (with 1 or more amino acids incorporated), which drop off the ribosome during protein synthesis, or as a result of ribosome stalling. Its function is as follows. Catalyzes the release of premature peptidyl moieties from peptidyl-tRNA molecules trapped in stalled 50S ribosomal subunits, and thus maintains levels of free tRNAs and 50S ribosomes. The polypeptide is Peptidyl-tRNA hydrolase (Rhizobium johnstonii (strain DSM 114642 / LMG 32736 / 3841) (Rhizobium leguminosarum bv. viciae)).